Here is a 459-residue protein sequence, read N- to C-terminus: Chaperone SurA (459 aa).

An N-terminal signal peptide occupies residues 1–23; the sequence is MNHRLVALSVASLALLAPLTVPA. PpiC domains lie at 197–301 and 312–411; these read VQQI…KVLE and VTQS…QLME.

The protein resides in the periplasm. The enzyme catalyses [protein]-peptidylproline (omega=180) = [protein]-peptidylproline (omega=0). Functionally, chaperone involved in the correct folding and assembly of outer membrane proteins. Recognizes specific patterns of aromatic residues and the orientation of their side chains, which are found more frequently in integral outer membrane proteins. May act in both early periplasmic and late outer membrane-associated steps of protein maturation. This is Chaperone SurA from Albidiferax ferrireducens (strain ATCC BAA-621 / DSM 15236 / T118) (Rhodoferax ferrireducens).